The chain runs to 1135 residues: Retinoblastoma-like protein 2 (1135 aa).

Residues 1 to 43 form a disordered region; sequence MASGGNQSPPPPPAAAASSEEEEEDGDAADRAQPAGSPSHQIQ. Ser410 carries the post-translational modification Phosphoserine. Residue Thr414 is modified to Phosphothreonine. The segment at 414–613 is domain A; that stretch reads TPVSTAAHSL…DRIRDNENRV (200 aa). Residues 414-1021 are pocket; binds E1A; the sequence is TPVSTAAHSL…QAFAMKYSQA (608 aa). Ser417 carries an O-linked (GlcNAc) serine glycan. Residues 614-824 form a spacer region; sequence PTCEEVMPPQ…PGQPLTSSSI (211 aa). Residue Ser636 is modified to Phosphoserine. A Phosphothreonine modification is found at Thr639. Ser659, Ser669, Ser684, Ser942, Ser946, Ser960, Ser965, and Ser967 each carry phosphoserine. 4 stretches are compositionally biased toward polar residues: residues 661-674, 683-692, 935-950, and 958-969; these read TTLY…TVST, DSPSEGSTSG, SGSS…PTEL, and DSSPVMRSNSTL. 2 disordered regions span residues 661 to 698 and 930 to 994; these read TTLY…PPQP and GKRR…VEEE. Residues 825-1021 are domain B; that stretch reads RPRKTSSLAL…QAFAMKYSQA (197 aa). Thr968 bears the Phosphothreonine mark. Over residues 971 to 981 the composition is skewed to pro residues; that stretch reads VPQPSSAPPTP. Phosphoserine occurs at positions 975 and 976. Position 980 is a phosphothreonine (Thr980). A phosphoserine mark is found at Ser1031, Ser1064, Ser1076, and Ser1108.

This sequence belongs to the retinoblastoma protein (RB) family. Interacts with AATF and RINT1. Component of the DREAM complex (also named LINC complex) at least composed of E2F4, E2F5, LIN9, LIN37, LIN52, LIN54, MYBL1, MYBL2, RBL1, RBL2, RBBP4, TFDP1 and TFDP2. The complex exists in quiescent cells where it represses cell cycle-dependent genes. It dissociates in S phase when LIN9, LIN37, LIN52 and LIN54 form a subcomplex that binds to MYBL2. Interacts with USP4. Interacts with KMT5B, KMT5C and USP4. Interacts with PML. Interacts with RBBP9. Interacts with CD53. In terms of processing, during G0 and early G1 phase of the cell cycle, phosphorylated on Ser-636 and on 5 sites within the domain B. Phosphorylation on Ser-669 in G1 leads to its ubiquitin-dependent proteolysis.

It localises to the nucleus. In terms of biological role, key regulator of entry into cell division. Directly involved in heterochromatin formation by maintaining overall chromatin structure and, in particular, that of constitutive heterochromatin by stabilizing histone methylation. Recruits and targets histone methyltransferases KMT5B and KMT5C, leading to epigenetic transcriptional repression. Controls histone H4 'Lys-20' trimethylation. Probably acts as a transcription repressor by recruiting chromatin-modifying enzymes to promoters. Potent inhibitor of E2F-mediated trans-activation, associates preferentially with E2F5. Binds to cyclins A and E. Binds to and may be involved in the transforming capacity of the adenovirus E1A protein. May act as a tumor suppressor. This Mus musculus (Mouse) protein is Retinoblastoma-like protein 2 (Rbl2).